We begin with the raw amino-acid sequence, 87 residues long: Beta-toxin Ct17 (87 aa).

The first 19 residues, 1–19, serve as a signal peptide directing secretion; sequence MNSLLMITACLVLIGTVWA. One can recognise an LCN-type CS-alpha/beta domain in the interval 20–85; it reads KKDGYLVDKT…TWPLPNKRCG (66 aa). Cystine bridges form between Cys-31-Cys-84, Cys-35-Cys-60, Cys-44-Cys-65, and Cys-48-Cys-67. Cysteine amide is present on Cys-84.

Belongs to the long (4 C-C) scorpion toxin superfamily. Sodium channel inhibitor family. Beta subfamily. Expressed by the venom gland.

The protein localises to the secreted. In terms of biological role, beta toxins bind voltage-independently at site-4 of sodium channels (Nav) and shift the voltage of activation toward more negative potentials thereby affecting sodium channel activation and promoting spontaneous and repetitive firing. Is possibly lethal to mice, freshwater shrimp and crickets. The polypeptide is Beta-toxin Ct17 (Centruroides tecomanus (Scorpion)).